Reading from the N-terminus, the 22-residue chain is Cytin chain B (22 aa).

This sequence belongs to the protease inhibitor I13 (potato type I serine protease inhibitor) family. As to quaternary structure, heterodimer of an A chain and a B chain, linked by a disulfide bond.

Its function is as follows. Inhibitor of chymotrypsin. The polypeptide is Cytin chain B (Theromyzon tessulatum (Duck leech)).